Reading from the N-terminus, the 519-residue chain is ATP synthase subunit alpha 2 (519 aa).

179–186 contributes to the ATP binding site; that stretch reads GDRQTGKT.

It belongs to the ATPase alpha/beta chains family. In terms of assembly, F-type ATPases have 2 components, CF(1) - the catalytic core - and CF(0) - the membrane proton channel. CF(1) has five subunits: alpha(3), beta(3), gamma(1), delta(1), epsilon(1). CF(0) has three main subunits: a(1), b(2) and c(9-12). The alpha and beta chains form an alternating ring which encloses part of the gamma chain. CF(1) is attached to CF(0) by a central stalk formed by the gamma and epsilon chains, while a peripheral stalk is formed by the delta and b chains.

The protein resides in the cell inner membrane. It carries out the reaction ATP + H2O + 4 H(+)(in) = ADP + phosphate + 5 H(+)(out). Its function is as follows. Produces ATP from ADP in the presence of a proton gradient across the membrane. The alpha chain is a regulatory subunit. The sequence is that of ATP synthase subunit alpha 2 from Syntrophus aciditrophicus (strain SB).